The chain runs to 235 residues: Large ribosomal subunit protein uL1 (235 aa).

It belongs to the universal ribosomal protein uL1 family. Part of the 50S ribosomal subunit.

Its function is as follows. Binds directly to 23S rRNA. The L1 stalk is quite mobile in the ribosome, and is involved in E site tRNA release. In terms of biological role, protein L1 is also a translational repressor protein, it controls the translation of the L11 operon by binding to its mRNA. The chain is Large ribosomal subunit protein uL1 from Fervidobacterium nodosum (strain ATCC 35602 / DSM 5306 / Rt17-B1).